The primary structure comprises 428 residues: L-lysine N6-monooxygenase MbtG (428 aa).

Positions 1–20 (MSTLAILGAGAKAVAVAAKA) are cleaved as a signal peptide.

This sequence belongs to the lysine N(6)-hydroxylase/L-ornithine N(5)-oxygenase family. FAD serves as cofactor.

It catalyses the reaction L-lysine + NADPH + O2 = N(6)-hydroxy-L-lysine + NADP(+) + H2O. It functions in the pathway siderophore biosynthesis; mycobactin biosynthesis. Its function is as follows. Flavoprotein monooxygenase required for N-hydroxylation of the two acylated lysine residues during mycobactin assembly, thus producing the hydroxamate groups necessary for iron sequestration. Is also able, but less efficiently, to hydroxylate L-lysine (non acylated) in vitro. The sequence is that of L-lysine N6-monooxygenase MbtG (mbtG) from Mycolicibacterium paratuberculosis (strain ATCC BAA-968 / K-10) (Mycobacterium paratuberculosis).